The primary structure comprises 89 residues: Microcin N (89 aa).

A signal peptide spans 1–15; that stretch reads MRELDREELNCVGGA.

The protein belongs to the class IIa microcin family. Mass spectrometry suggests 3 of the 4 Met residues of the mature peptide are oxidized.

The protein localises to the secreted. Its function is as follows. Active against E.coli and Salmonella, but not Listeria or Campylobacter. Channel-forming microcin. Probably neutralized by its immunity protein McnI. This is Microcin N from Escherichia coli.